Consider the following 124-residue polypeptide: MAVSLSASARRRTAKLRRHVRVRKKVSGTPIRPRLVVTRSSRHIYAQVIDDVAGHTLASASTLEDGLRASDGDKSAKAREVGRLVAERARAAGIDAVVFDRGGRTYHGRIAALADAAREGGLNF.

This sequence belongs to the universal ribosomal protein uL18 family. Part of the 50S ribosomal subunit; part of the 5S rRNA/L5/L18/L25 subcomplex. Contacts the 5S and 23S rRNAs.

In terms of biological role, this is one of the proteins that bind and probably mediate the attachment of the 5S RNA into the large ribosomal subunit, where it forms part of the central protuberance. This chain is Large ribosomal subunit protein uL18, found in Parafrankia sp. (strain EAN1pec).